Here is a 127-residue protein sequence, read N- to C-terminus: uncharacterized protein (127 aa).

This is an uncharacterized protein from Human cytomegalovirus (strain Toledo) (HHV-5).